A 101-amino-acid chain; its full sequence is Small ribosomal subunit protein uS10 (101 aa).

It belongs to the universal ribosomal protein uS10 family. In terms of assembly, part of the 30S ribosomal subunit.

Its function is as follows. Involved in the binding of tRNA to the ribosomes. The protein is Small ribosomal subunit protein uS10 of Mycobacterium ulcerans (strain Agy99).